We begin with the raw amino-acid sequence, 189 residues long: Small ribosomal subunit protein uS5 (189 aa).

The region spanning 20 to 83 (FVDRLVHINR…ESAKRALIRV (64 aa)) is the S5 DRBM domain.

It belongs to the universal ribosomal protein uS5 family. As to quaternary structure, part of the 30S ribosomal subunit. Contacts proteins S4 and S8.

In terms of biological role, with S4 and S12 plays an important role in translational accuracy. Its function is as follows. Located at the back of the 30S subunit body where it stabilizes the conformation of the head with respect to the body. This is Small ribosomal subunit protein uS5 from Beijerinckia indica subsp. indica (strain ATCC 9039 / DSM 1715 / NCIMB 8712).